The sequence spans 397 residues: tRNA-specific 2-thiouridylase MnmA (397 aa).

ATP-binding positions include 19-26 (AMSGGVDS) and leucine 45. Cysteine 113 functions as the Nucleophile in the catalytic mechanism. A disulfide bond links cysteine 113 and cysteine 210. Glycine 137 contributes to the ATP binding site. Residues 160-162 (RDQ) form an interaction with tRNA region. The active-site Cysteine persulfide intermediate is cysteine 210.

This sequence belongs to the MnmA/TRMU family.

The protein localises to the cytoplasm. The enzyme catalyses S-sulfanyl-L-cysteinyl-[protein] + uridine(34) in tRNA + AH2 + ATP = 2-thiouridine(34) in tRNA + L-cysteinyl-[protein] + A + AMP + diphosphate + H(+). In terms of biological role, catalyzes the 2-thiolation of uridine at the wobble position (U34) of tRNA, leading to the formation of s(2)U34. The protein is tRNA-specific 2-thiouridylase MnmA of Rhodopseudomonas palustris (strain ATCC BAA-98 / CGA009).